The chain runs to 77 residues: Conotoxin VnMKLT1-012 (77 aa).

The signal sequence occupies residues 1-22 (MKLTCMMIVAVLFLTAWTFVTA). A propeptide spanning residues 23-48 (DDSRNGLDYLFPKARHEMNPKASRDI) is cleaved from the precursor. 3 cysteine pairs are disulfide-bonded: cysteine 51–cysteine 68, cysteine 58–cysteine 72, and cysteine 67–cysteine 76.

It belongs to the conotoxin O1 superfamily. Expressed by the venom duct.

It is found in the secreted. In Conus ventricosus (Mediterranean cone), this protein is Conotoxin VnMKLT1-012.